Reading from the N-terminus, the 326-residue chain is Phenylserine dehydratase (326 aa).

As to quaternary structure, monomer. Requires pyridoxal 5'-phosphate as cofactor.

It carries out the reaction L-threo-3-phenylserine = 3-phenylpyruvate + NH4(+). Inhibited by phenylhydrazine, hydroxylamine, p-chloromercuribenzoate, and HgCl(2). The protein is Phenylserine dehydratase of Ralstonia pickettii (Burkholderia pickettii).